We begin with the raw amino-acid sequence, 239 residues long: Putative GEM-like protein 3 (239 aa).

Positions 29 to 68 (HWNPELVSESPAPDEKALSSSSAARSNPYVARAPTETSDA) are disordered. The GRAM domain maps to 128–191 (KIFRQTFETV…HQLKSVNPSI (64 aa)).

Belongs to the GEM family.

This is Putative GEM-like protein 3 from Arabidopsis thaliana (Mouse-ear cress).